Here is a 208-residue protein sequence, read N- to C-terminus: Small ribosomal subunit protein uS4 (208 aa).

The S4 RNA-binding domain occupies 98-160; the sequence is RRIDNTVYRL…SRQLQMINEA (63 aa).

This sequence belongs to the universal ribosomal protein uS4 family. In terms of assembly, part of the 30S ribosomal subunit. Contacts protein S5. The interaction surface between S4 and S5 is involved in control of translational fidelity.

In terms of biological role, one of the primary rRNA binding proteins, it binds directly to 16S rRNA where it nucleates assembly of the body of the 30S subunit. With S5 and S12 plays an important role in translational accuracy. The protein is Small ribosomal subunit protein uS4 of Syntrophobacter fumaroxidans (strain DSM 10017 / MPOB).